A 238-amino-acid polypeptide reads, in one-letter code: MYHLNQKALLLFSGGQDSGTCLGWALSNFSHIITIGFSYGQRHSVEMQCRTNIRNKISKLSKIWEQRLGEDYIFSLDIFSQLGETAITSELEIVFDKQGLPNTFVPGRNIFFLTIAAAFAWRNSIRHLIIGTCETDFSGYPDCQDNSIKATQLALSLGLGEDITIHTPLMWLTKAQTWELALHLGGSKFVDLIRNETHSCYLNDHTTSHEWGYGCGTCPACKLRKNGWETFLMKKRAN.

Residue 12–22 coordinates ATP; sequence FSGGQDSGTCL. Zn(2+) is bound by residues cysteine 200, cysteine 215, cysteine 218, and cysteine 221.

This sequence belongs to the QueC family. Zn(2+) serves as cofactor.

It carries out the reaction 7-carboxy-7-deazaguanine + NH4(+) + ATP = 7-cyano-7-deazaguanine + ADP + phosphate + H2O + H(+). It functions in the pathway purine metabolism; 7-cyano-7-deazaguanine biosynthesis. Functionally, catalyzes the ATP-dependent conversion of 7-carboxy-7-deazaguanine (CDG) to 7-cyano-7-deazaguanine (preQ(0)). This chain is 7-cyano-7-deazaguanine synthase, found in Lawsonia intracellularis (strain PHE/MN1-00).